The primary structure comprises 1003 residues: MGEPEEVMPGSGAVFTFGKTQFAENIPSKFWFRNDVPTFLSCGDEHTAVVTGNNKLYMFGSNNWGQLGLGSKSTVSKPTCVKALKPEKVKFAACGRNHTLVSTEGGKVYAAGGNNEGQLGLGDTEERSTFHLISFFTSQRKIKQLSAGSNTSAALTEDGELFMWGDNSEGQIGLENVTNVCVPQQVTVGKPISWISCGYYHSAFVTTEGQLYTFGEPECGKLGLPNQLLVNHRMPQPVPGIPGKVVQVACGGGHTVVLTEKAVYTFGLGQFGQLGLGTFLFETSVPKAIEHIKDQKISFIACGENHTALITDMGLMYTFGDGRHGKLGLGLENSTNQFIPTLCSNFLRFIVQLVSCGGCHTLVFATPRLGGTEEMELKEINKSCFSAATSLSLSNLSSGIVLHQTLSARVRRREREKSPDSFQMTRTLPPIDGIPMPPVCFSPSPIPFYMAASNWSGKMTPEKEGLTQPEPDYFRDNMAKGKETDNSSATDSESLGETTDVLNMTHMMSLNSNDKSLKLSPIDKQKKQETIEKLKQHTAHFGNDDSKGCASEEMSKTVKEGKAYKQLLAKGIYMTQAAMTMEAFSDEDIGNDSGQPGPRADTHAEGVQRKIFSCESKHGLYPPDFKAIAKESDGGQSQKDPEAEETVSEKENELAEMAGLQARRQSEENLRNINMFFDDLPNRDVNIEDEESKDFVKDSRRNKQDVIFDSERESIEEPDSYLEGESESQQGTTDGFEQPESVEFSSGEKEDDDEVETDQNLWYSRKFIEQGHKEETEHILSKFMAKYDFKCDHLSEIPEEQEGAEDSEGSGIEEQEVEANENVEVPAGKEEKEIEILSDDLTDRAEDHEFSEDEEPEDMAEELDEDLESKKNVPADVASDNSLKKDETTKQEKRAICEYNENPKGNMHYHAKSSSSEVLNDSESTPNKDVKKSKKIFLFKRMSLMSQKSMQSNNEPLPEIKPIGDQIAFKGNKKDANQNHMGQNHQDTSPPDMERRSKSCTIL.

6 RCC1 repeats span residues 54–105 (NKLY…STEG), 106–158 (GKVY…LTED), 159–208 (GELF…VTTE), 209–261 (GQLY…LTEK), 262–313 (AVYT…ITDM), and 314–367 (GLMY…FATP). Position 418 is a phosphoserine (Ser-418). Residues 460–495 (TPEKEGLTQPEPDYFRDNMAKGKETDNSSATDSESL) are disordered. Residues 472–485 (DYFRDNMAKGKETD) show a composition bias toward basic and acidic residues. A compositionally biased stretch (polar residues) spans 486–495 (NSSATDSESL). The residue at position 520 (Ser-520) is a Phosphoserine. 4 disordered regions span residues 625–657 (FKAIAKESDGGQSQKDPEAEETVSEKENELAEM), 691–760 (ESKD…TDQN), 794–932 (LSEI…DVKK), and 968–1003 (AFKGNKKDANQNHMGQNHQDTSPPDMERRSKSCTIL). Residues 693–715 (KDFVKDSRRNKQDVIFDSERESI) show a composition bias toward basic and acidic residues. 2 stretches are compositionally biased toward acidic residues: residues 716–726 (EEPDSYLEGES) and 797–821 (IPEEQEGAEDSEGSGIEEQEVEANE). Over residues 827–848 (AGKEEKEIEILSDDLTDRAEDH) the composition is skewed to basic and acidic residues. A compositionally biased stretch (acidic residues) spans 849–867 (EFSEDEEPEDMAEELDEDL). The span at 882-896 (SLKKDETTKQEKRAI) shows a compositional bias: basic and acidic residues. Over residues 913–924 (SSSSEVLNDSES) the composition is skewed to low complexity. Positions 978 to 989 (QNHMGQNHQDTS) are enriched in polar residues. A Cysteine methyl ester modification is found at Cys-1000. A lipid anchor (S-geranylgeranyl cysteine) is attached at Cys-1000. A propeptide spans 1001–1003 (TIL) (removed in mature form).

Interacts with PDE6D. Interacts with RPGRIP1. Interacts with RPGRIP1L. PDE6D, RPGRIP1 and RPGRIP1L may compete for the same binding sites. Interacts with NPM1. Interacts with SMC1A and SMC3. Interacts with CEP290. Interacts with WHRN. Interacts with SPATA7. Interacts with RAB37 and RAB8A (in GDP-bound forms); functions as GEF for RAB37 and RAB8A. In terms of processing, prenylated. As to expression, isoform 1 is expressed exclusively in testis. Isoforms 2, 3 and 4 are widely expressed.

The protein localises to the golgi apparatus. Its subcellular location is the cell projection. The protein resides in the cilium. It is found in the cytoplasm. It localises to the cytoskeleton. The protein localises to the cilium basal body. Its subcellular location is the microtubule organizing center. The protein resides in the centrosome. It is found in the cilium axoneme. It localises to the flagellum axoneme. Functionally, acts as a guanine-nucleotide releasing factor (GEF) for RAB8A and RAB37 by promoting the conversion of inactive RAB-GDP to the active form RAB-GTP. GEF activity towards RAB8A may facilitate ciliary trafficking by modulating ciliary intracellular localization of RAB8A. GEF activity towards RAB37 maintains autophagic homeostasis and retinal function. Involved in photoreceptor integrity. May control cilia formation by regulating actin stress filaments and cell contractility. May be involved in microtubule organization and regulation of transport in primary cilia. May play a critical role in spermatogenesis and in intraflagellar transport processes. The sequence is that of X-linked retinitis pigmentosa GTPase regulator (RPGR) from Canis lupus familiaris (Dog).